The following is a 787-amino-acid chain: ATP-dependent zinc metalloprotease FtsH (787 aa).

Residues 1-5 lie on the Cytoplasmic side of the membrane; it reads MNRKN. A helical transmembrane segment spans residues 6–26; it reads VIRMVTAIAVVVLLGWSFFYF. Over 27–110 the chain is Extracellular; the sequence is SDDTRGYKFV…KVTTAVNEGS (84 aa). Residues 111 to 131 form a helical membrane-spanning segment; it reads ILGELLVYVLPLLLLVGLFVM. Over 132-787 the chain is Cytoplasmic; it reads FSRMQGGARM…VSPSNPPAHG (656 aa). 203–210 provides a ligand contact to ATP; it reads GPPGTGKT. Position 425 (His425) interacts with Zn(2+). Residue Glu426 is part of the active site. Residues His429 and Asp501 each coordinate Zn(2+). The segment at 616 to 787 is disordered; sequence DFGGRIPSDK…VSPSNPPAHG (172 aa). Low complexity-rich tracts occupy residues 650-671 and 700-709; these read AFKAAIARASQAAEASHQAAQS and YGAPPGWHAP. Residues 710–720 are compositionally biased toward pro residues; it reads GWPPQQPPDYW. The span at 721 to 732 shows a compositional bias: low complexity; the sequence is YPPEQQPSQSPY. The segment covering 733–762 has biased composition (pro residues); the sequence is WPQPAPSYPGQAPPPYPSYPPCPSYPPPGQ.

In the central section; belongs to the AAA ATPase family. It in the C-terminal section; belongs to the peptidase M41 family. As to quaternary structure, homohexamer. The cofactor is Zn(2+).

Its subcellular location is the cell membrane. Acts as a processive, ATP-dependent zinc metallopeptidase for both cytoplasmic and membrane proteins. Plays a role in the quality control of integral membrane proteins. The protein is ATP-dependent zinc metalloprotease FtsH of Mycobacterium leprae (strain TN).